The primary structure comprises 122 residues: uncharacterized protein (122 aa).

Residues 93–113 (ILRICIVFLSLKIYTLTLVII) traverse the membrane as a helical segment.

Its subcellular location is the membrane. This is an uncharacterized protein from Saccharomyces cerevisiae (strain ATCC 204508 / S288c) (Baker's yeast).